The sequence spans 376 residues: ATP phosphoribosyltransferase regulatory subunit (376 aa).

The protein belongs to the class-II aminoacyl-tRNA synthetase family. HisZ subfamily. Heteromultimer composed of HisG and HisZ subunits.

It is found in the cytoplasm. It participates in amino-acid biosynthesis; L-histidine biosynthesis; L-histidine from 5-phospho-alpha-D-ribose 1-diphosphate: step 1/9. Its function is as follows. Required for the first step of histidine biosynthesis. May allow the feedback regulation of ATP phosphoribosyltransferase activity by histidine. This chain is ATP phosphoribosyltransferase regulatory subunit, found in Brucella canis (strain ATCC 23365 / NCTC 10854 / RM-666).